The following is a 456-amino-acid chain: 5-hydroxytryptamine receptor 3E (456 aa).

An N-terminal signal peptide occupies residues Met-1–Gly-25. Residues Val-26–Ser-248 lie on the Extracellular side of the membrane. Cysteines 162 and 176 form a disulfide. Residue Asn-175 is glycosylated (N-linked (GlcNAc...) asparagine). A helical transmembrane segment spans residues Leu-249–Phe-269. Residues Tyr-270 to Lys-282 are Cytoplasmic-facing. Residues Ile-283–Ser-303 traverse the membrane as a helical segment. The Extracellular segment spans residues Gly-304–Leu-307. Residues Ile-308–Phe-328 traverse the membrane as a helical segment. Over Ile-329–Ala-433 the chain is Cytoplasmic. The interval Thr-401–Asp-432 is HA-stretch; determines single-channel conductance in 5-HT3 receptors. The chain crosses the membrane as a helical span at residues Met-434–Trp-454. At Asn-455 to Thr-456 the chain is on the extracellular side.

It belongs to the ligand-gated ion channel (TC 1.A.9) family. 5-hydroxytryptamine receptor (TC 1.A.9.2) subfamily. HTR3E sub-subfamily. As to quaternary structure, forms homopentameric as well as heteropentameric serotonin-activated cation-selective channel complexes with HTR3A. The homomeric complex is not functional. Heteropentameric complexes display properties which resemble that of neuronal serotonin-activated channels in vivo. Expressed in adult colon and intestine.

The protein resides in the postsynaptic cell membrane. It localises to the cell membrane. It catalyses the reaction Na(+)(in) = Na(+)(out). The enzyme catalyses K(+)(in) = K(+)(out). The catalysed reaction is Ca(2+)(in) = Ca(2+)(out). In terms of biological role, forms serotonin (5-hydroxytryptamine/5-HT3)-activated cation-selective channel complexes, which when activated cause fast, depolarizing responses in neurons. The polypeptide is 5-hydroxytryptamine receptor 3E (Homo sapiens (Human)).